The primary structure comprises 119 residues: Small ribosomal subunit protein eS25 (119 aa).

Residues 1-42 form a disordered region; that stretch reads MPPKKDTKASAKQPQKTQKKKEGSGGGKAKKKKWSKGKVRDK. Over residues 28–37 the composition is skewed to basic residues; the sequence is KAKKKKWSKG.

The protein belongs to the eukaryotic ribosomal protein eS25 family.

The sequence is that of Small ribosomal subunit protein eS25 (RpS25) from Spodoptera frugiperda (Fall armyworm).